We begin with the raw amino-acid sequence, 487 residues long: Phenylalanine--tRNA ligase alpha subunit (487 aa).

L-phenylalanine contacts are provided by residues T319, 361–363 (QVE), and Y401. A Mg(2+)-binding site is contributed by E403. Residue F427 coordinates L-phenylalanine.

Belongs to the class-II aminoacyl-tRNA synthetase family. Phe-tRNA synthetase alpha subunit type 2 subfamily. In terms of assembly, tetramer of two alpha and two beta subunits. Requires Mg(2+) as cofactor.

The protein resides in the cytoplasm. It carries out the reaction tRNA(Phe) + L-phenylalanine + ATP = L-phenylalanyl-tRNA(Phe) + AMP + diphosphate + H(+). This Dictyostelium discoideum (Social amoeba) protein is Phenylalanine--tRNA ligase alpha subunit (phesA).